The following is a 308-amino-acid chain: Mycothiol acetyltransferase (308 aa).

2 consecutive N-acetyltransferase domains span residues 12 to 149 (DVLD…RPLG) and 165 to 308 (VTVR…RTET). Position 43 (E43) interacts with 1D-myo-inositol 2-(L-cysteinylamino)-2-deoxy-alpha-D-glucopyranoside. Acetyl-CoA is bound at residue 88–90 (LVV). 1D-myo-inositol 2-(L-cysteinylamino)-2-deoxy-alpha-D-glucopyranoside-binding residues include E192, K231, and E240. Acetyl-CoA is bound by residues 244-246 (VGV) and 251-257 (QGGGLGR). Y278 serves as a coordination point for 1D-myo-inositol 2-(L-cysteinylamino)-2-deoxy-alpha-D-glucopyranoside.

Belongs to the acetyltransferase family. MshD subfamily. Monomer.

It catalyses the reaction 1D-myo-inositol 2-(L-cysteinylamino)-2-deoxy-alpha-D-glucopyranoside + acetyl-CoA = mycothiol + CoA + H(+). Its function is as follows. Catalyzes the transfer of acetyl from acetyl-CoA to desacetylmycothiol (Cys-GlcN-Ins) to form mycothiol. The polypeptide is Mycothiol acetyltransferase (Streptomyces bingchenggensis (strain BCW-1)).